Reading from the N-terminus, the 334-residue chain is MAIKMDKNFTLEILNLLKNNVLKNRLKIGKELTEMLIDEIDKLIETANEISEEISKNSPNNSSLYDLRLIYNKLSTLYEDIDKLLGEIECILSLSNKDIKNWKLWKNLGDKAYLWKAYYEALFCYNKALELNQNTELLCKKGYALLKLYKRDLAIKYFEKASEKDRNNYKALFGLGKSYYLMSDNKNSIKYFEKVLELNPNDVEALEYLGELYYEEDCEKAINYFKKALELKPDDIDLILKVAFTYFKLKKYKHALKYFEKALKLNPNVFELEQIYESMGRIYIYLGEDEKAIECFEKLKEINLYHYEIYEIIALTYEEVGNIEKAKEFYKKLV.

TPR repeat units follow at residues 102–135 (WKLWKNLGDKAYLWKAYYEALFCYNKALELNQNT), 137–168 (LLCKKGYALLKLYKRDLAIKYFEKASEKDRNN), 169–202 (YKALFGLGKSYYLMSDNKNSIKYFEKVLELNPND), 204–235 (EALEYLGELYYEEDCEKAINYFKKALELKPDD), 236–269 (IDLILKVAFTYFKLKKYKHALKYFEKALKLNPNV), 273–306 (EQIYESMGRIYIYLGEDEKAIECFEKLKEINLYH), and 308–333 (EIYEIIALTYEEVGNIEKAKEFYKKL).

This is TPR repeat-containing protein MJ0798 from Methanocaldococcus jannaschii (strain ATCC 43067 / DSM 2661 / JAL-1 / JCM 10045 / NBRC 100440) (Methanococcus jannaschii).